The sequence spans 434 residues: Adenylosuccinate synthetase (434 aa).

GTP is bound by residues 11 to 17 (GDEGKGK) and 39 to 41 (GHT). Catalysis depends on aspartate 12, which acts as the Proton acceptor. Mg(2+)-binding residues include aspartate 12 and glycine 39. IMP is bound by residues 12 to 15 (DEGK), 37 to 40 (NAGH), threonine 134, arginine 148, asparagine 230, threonine 245, and arginine 309. Histidine 40 functions as the Proton donor in the catalytic mechanism. Substrate is bound at residue 305-311 (VTTGRKR). GTP contacts are provided by residues arginine 311, 337-339 (KLD), and 419-421 (GTG).

Belongs to the adenylosuccinate synthetase family. As to quaternary structure, homodimer. Requires Mg(2+) as cofactor.

The protein localises to the cytoplasm. It carries out the reaction IMP + L-aspartate + GTP = N(6)-(1,2-dicarboxyethyl)-AMP + GDP + phosphate + 2 H(+). The protein operates within purine metabolism; AMP biosynthesis via de novo pathway; AMP from IMP: step 1/2. Its function is as follows. Plays an important role in the de novo pathway and in the salvage pathway of purine nucleotide biosynthesis. Catalyzes the first committed step in the biosynthesis of AMP from IMP. This chain is Adenylosuccinate synthetase, found in Lachancea thermotolerans (strain ATCC 56472 / CBS 6340 / NRRL Y-8284) (Yeast).